The chain runs to 113 residues: Meiotically up-regulated gene 98 protein, mitochondrial (113 aa).

It localises to the mitochondrion. Its function is as follows. Has a role in meiosis. This is Meiotically up-regulated gene 98 protein, mitochondrial (mug98) from Schizosaccharomyces pombe (strain 972 / ATCC 24843) (Fission yeast).